Here is a 383-residue protein sequence, read N- to C-terminus: Succinyl-diaminopimelate desuccinylase (383 aa).

H74 is a Zn(2+) binding site. D76 is an active-site residue. D107 provides a ligand contact to Zn(2+). The Proton acceptor role is filled by E141. Residues E142, E170, and H356 each contribute to the Zn(2+) site.

It belongs to the peptidase M20A family. DapE subfamily. Homodimer. The cofactor is Zn(2+). Co(2+) is required as a cofactor.

It catalyses the reaction N-succinyl-(2S,6S)-2,6-diaminopimelate + H2O = (2S,6S)-2,6-diaminopimelate + succinate. Its pathway is amino-acid biosynthesis; L-lysine biosynthesis via DAP pathway; LL-2,6-diaminopimelate from (S)-tetrahydrodipicolinate (succinylase route): step 3/3. In terms of biological role, catalyzes the hydrolysis of N-succinyl-L,L-diaminopimelic acid (SDAP), forming succinate and LL-2,6-diaminopimelate (DAP), an intermediate involved in the bacterial biosynthesis of lysine and meso-diaminopimelic acid, an essential component of bacterial cell walls. The polypeptide is Succinyl-diaminopimelate desuccinylase (Ralstonia nicotianae (strain ATCC BAA-1114 / GMI1000) (Ralstonia solanacearum)).